Reading from the N-terminus, the 186-residue chain is Agglutinin isolectin 3 (186 aa).

A Pyrrolidone carboxylic acid modification is found at Q1. Chitin-binding type-1 domains are found at residues 1 to 42 (QRCG…ACWT), 43 to 85 (SKRC…PCRA), 86 to 128 (DIKC…ACST), and 129 to 171 (DKPC…GCDG). 16 disulfides stabilise this stretch: C3-C18, C12-C24, C17-C31, C35-C40, C46-C61, C55-C67, C60-C74, C78-C83, C89-C104, C98-C110, C103-C117, C121-C126, C132-C147, C141-C153, C146-C160, and C164-C169. 10–12 (MEC) contacts substrate. 62-73 (SQYGHCGFGAEY) serves as a coordination point for substrate. 114–115 (SE) contributes to the substrate binding site. The propeptide occupies 172–186 (VFAEAIATNSTLLAE). N180 is a glycosylation site (N-linked (GlcNAc...) asparagine).

In terms of assembly, homodimer, u-shaped.

Functionally, N-acetyl-D-glucosamine / N-acetyl-D-neuraminic acid binding lectin. In Triticum aestivum (Wheat), this protein is Agglutinin isolectin 3.